The sequence spans 249 residues: Ribonuclease 3 (249 aa).

Residues 20 to 149 (FKEFQERISV…FIGALYLDQG (130 aa)) form the RNase III domain. Glutamate 62 provides a ligand contact to Mg(2+). The active site involves aspartate 66. 2 residues coordinate Mg(2+): aspartate 135 and glutamate 138. Glutamate 138 is an active-site residue. The DRBM domain maps to 175–244 (DFKSQLQEFV…AQEALAKMQK (70 aa)). Positions 223–249 (NGRSKKEAEQHAAQEALAKMQKHHTKQ) are disordered.

This sequence belongs to the ribonuclease III family. In terms of assembly, homodimer. It depends on Mg(2+) as a cofactor.

It localises to the cytoplasm. The enzyme catalyses Endonucleolytic cleavage to 5'-phosphomonoester.. In terms of biological role, digests double-stranded RNA. Involved in the processing of primary rRNA transcript to yield the immediate precursors to the large and small rRNAs (23S and 16S). Processes some mRNAs, and tRNAs when they are encoded in the rRNA operon. Processes pre-crRNA and tracrRNA of type II CRISPR loci if present in the organism. In Bacillus velezensis (strain DSM 23117 / BGSC 10A6 / LMG 26770 / FZB42) (Bacillus amyloliquefaciens subsp. plantarum), this protein is Ribonuclease 3.